A 314-amino-acid polypeptide reads, in one-letter code: Hydroxyacyl-coenzyme A dehydrogenase, mitochondrial (314 aa).

Residues 1–12 constitute a mitochondrion transit peptide; the sequence is MAFVTRQFMRSV. NAD(+) contacts are provided by residues 34–39 and D57; that span reads GGGLMG. Residues S73 and K80 each contribute to the CoA site. At K80 the chain carries N6-succinyllysine. K81 and K87 each carry N6-acetyllysine; alternate. K81 and K87 each carry N6-succinyllysine; alternate. Residue E122 participates in NAD(+) binding. At K125 the chain carries N6-acetyllysine. K127 contacts NAD(+). K127 carries the N6-(2-hydroxyisobutyryl)lysine modification. Position 136 is an N6-acetyllysine; alternate (K136). The residue at position 136 (K136) is an N6-succinyllysine; alternate. Residues S149 and N173 each contribute to the NAD(+) site. S149 lines the CoA pocket. The residue at position 179 (K179) is an N6-acetyllysine. N6-acetyllysine; alternate occurs at positions 185, 192, and 202. 3 positions are modified to N6-succinyllysine; alternate: K185, K192, and K202. K206 carries the N6-succinyllysine modification. An N6-acetyllysine; alternate mark is found at K212 and K241. An N6-succinyllysine; alternate mark is found at K212 and K241. K305 serves as a coordination point for NAD(+). The residue at position 312 (K312) is an N6-acetyllysine; alternate. K312 carries the post-translational modification N6-succinyllysine; alternate.

The protein belongs to the 3-hydroxyacyl-CoA dehydrogenase family. Homodimer. Interacts with GLUD1; this interaction inhibits the activation of glutamate dehydrogenase 1 (GLUD1). Succinylation at Lys-81, adjacent to a coenzyme A binding site. Desuccinylated by SIRT5. In terms of tissue distribution, expressed in liver, kidney, pancreas, heart and skeletal muscle.

The protein resides in the mitochondrion matrix. The catalysed reaction is a (3S)-3-hydroxyacyl-CoA + NAD(+) = a 3-oxoacyl-CoA + NADH + H(+). The enzyme catalyses (3S)-3-hydroxybutanoyl-CoA + NAD(+) = acetoacetyl-CoA + NADH + H(+). It carries out the reaction (3S)-hydroxydecanoyl-CoA + NAD(+) = 3-oxodecanoyl-CoA + NADH + H(+). It catalyses the reaction (3S)-hydroxyhexadecanoyl-CoA + NAD(+) = 3-oxohexadecanoyl-CoA + NADH + H(+). The protein operates within lipid metabolism; fatty acid beta-oxidation. Mitochondrial fatty acid beta-oxidation enzyme that catalyzes the third step of the beta-oxidation cycle for medium and short-chain 3-hydroxy fatty acyl-CoAs (C4 to C10). Plays a role in the control of insulin secretion by inhibiting the activation of glutamate dehydrogenase 1 (GLUD1), an enzyme that has an important role in regulating amino acid-induced insulin secretion. Plays a role in the maintenance of normal spermatogenesis through the reduction of fatty acid accumulation in the testes. In Homo sapiens (Human), this protein is Hydroxyacyl-coenzyme A dehydrogenase, mitochondrial (HADH).